A 102-amino-acid chain; its full sequence is Protein 108 (102 aa).

Residues 1–30 (MASVKSSSSSSSSSFISLLLLILLVIVLQS) form the signal peptide. Disulfide bonds link cysteine 41–cysteine 77, cysteine 51–cysteine 66, cysteine 67–cysteine 92, and cysteine 79–cysteine 99.

The protein belongs to the A9/FIL1 family. As to expression, stamen- and tapetum-specific.

Its subcellular location is the secreted. This chain is Protein 108, found in Solanum lycopersicum (Tomato).